Here is a 439-residue protein sequence, read N- to C-terminus: Xylose isomerase (439 aa).

Residues H101 and D104 contribute to the active site. Mg(2+) is bound by residues E232, E268, H271, D296, D307, D309, and D339.

The protein belongs to the xylose isomerase family. In terms of assembly, homotetramer. Mg(2+) is required as a cofactor.

It is found in the cytoplasm. The enzyme catalyses alpha-D-xylose = alpha-D-xylulofuranose. This chain is Xylose isomerase, found in Haemophilus influenzae (strain PittGG).